Here is a 230-residue protein sequence, read N- to C-terminus: Ribonuclease HII (230 aa).

Residues 28-217 form the RNase H type-2 domain; that stretch reads FRIAGIDEAG…VKEHLPSQPD (190 aa). A divalent metal cation contacts are provided by Asp34, Glu35, and Asp126. Positions 209-230 are disordered; that stretch reads KEHLPSQPDSDTAGPSTGLFSF. Over residues 215 to 230 the composition is skewed to polar residues; the sequence is QPDSDTAGPSTGLFSF.

The protein belongs to the RNase HII family. The cofactor is Mn(2+). It depends on Mg(2+) as a cofactor.

It is found in the cytoplasm. The catalysed reaction is Endonucleolytic cleavage to 5'-phosphomonoester.. Endonuclease that specifically degrades the RNA of RNA-DNA hybrids. The chain is Ribonuclease HII from Citrifermentans bemidjiense (strain ATCC BAA-1014 / DSM 16622 / JCM 12645 / Bem) (Geobacter bemidjiensis).